The chain runs to 109 residues: Cell division protein ZapA (109 aa).

The stretch at 21 to 99 forms a coiled coil; sequence PEQRDALNQA…IEQALLEQGR (79 aa).

Belongs to the ZapA family. Type 1 subfamily. As to quaternary structure, homodimer. Interacts with FtsZ.

Its subcellular location is the cytoplasm. In terms of biological role, activator of cell division through the inhibition of FtsZ GTPase activity, therefore promoting FtsZ assembly into bundles of protofilaments necessary for the formation of the division Z ring. It is recruited early at mid-cell but it is not essential for cell division. The polypeptide is Cell division protein ZapA (Klebsiella pneumoniae (strain 342)).